A 407-amino-acid polypeptide reads, in one-letter code: 1-deoxy-D-xylulose 5-phosphate reductoisomerase (407 aa).

NADPH-binding residues include threonine 25, glycine 26, serine 27, isoleucine 28, asparagine 53, and asparagine 136. Lysine 137 provides a ligand contact to 1-deoxy-D-xylulose 5-phosphate. Glutamate 138 provides a ligand contact to NADPH. Aspartate 162 lines the Mn(2+) pocket. Positions 163, 164, 188, and 211 each coordinate 1-deoxy-D-xylulose 5-phosphate. A Mn(2+)-binding site is contributed by glutamate 164. Residue glycine 217 coordinates NADPH. Residues serine 224, asparagine 229, lysine 230, and glutamate 233 each coordinate 1-deoxy-D-xylulose 5-phosphate. Mn(2+) is bound at residue glutamate 233.

This sequence belongs to the DXR family. It depends on Mg(2+) as a cofactor. Requires Mn(2+) as cofactor.

The catalysed reaction is 2-C-methyl-D-erythritol 4-phosphate + NADP(+) = 1-deoxy-D-xylulose 5-phosphate + NADPH + H(+). It participates in isoprenoid biosynthesis; isopentenyl diphosphate biosynthesis via DXP pathway; isopentenyl diphosphate from 1-deoxy-D-xylulose 5-phosphate: step 1/6. Catalyzes the NADPH-dependent rearrangement and reduction of 1-deoxy-D-xylulose-5-phosphate (DXP) to 2-C-methyl-D-erythritol 4-phosphate (MEP). The chain is 1-deoxy-D-xylulose 5-phosphate reductoisomerase from Rhodopseudomonas palustris (strain TIE-1).